The primary structure comprises 423 residues: Polyglutamylase complex subunit TTLL1 (423 aa).

The region spanning Met-1–Asn-367 is the TTL domain. ATP contacts are provided by residues Lys-138, Gln-144–Gly-145, Ser-181–Ile-184, and Lys-194–Asp-196. Gln-144 is an a protein binding site. Position 220 (Arg-220) interacts with L-glutamate. Thr-241–Asn-242 contributes to the ATP binding site. L-glutamate is bound at residue Lys-259. Mg(2+) contacts are provided by Asp-313, Glu-326, and Asn-328. Lys-344 lines the L-glutamate pocket. The segment at Asp-390 to Lys-423 is disordered.

Belongs to the tubulin polyglutamylase family. In terms of assembly, part of the neuronal tubulin polyglutamylase complex which contains TPGS1, TPGS2, TTLL1, LRRC49 and NICN1. Interacts with PCM1, CSTPP1 and LRRC49. The cofactor is Mg(2+).

The protein localises to the cytoplasm. Its subcellular location is the cytoskeleton. It localises to the cilium basal body. It is found in the cilium axoneme. The protein resides in the cell projection. The protein localises to the cilium. Its subcellular location is the flagellum. It catalyses the reaction (L-glutamyl)(n)-gamma-L-glutamyl-L-glutamyl-[protein] + L-glutamate + ATP = (L-glutamyl)(n+1)-gamma-L-glutamyl-L-glutamyl-[protein] + ADP + phosphate + H(+). Its function is as follows. Catalytic subunit of a polyglutamylase complex which modifies tubulin, generating side chains of glutamate on the gamma-carboxyl group of specific glutamate residues within the C-terminal tail of tubulin. Probably involved in the side-chain elongation step of the polyglutamylation reaction rather than the initiation step. Modifies both alpha- and beta-tubulins with a preference for the alpha-tail. Unlike most polyglutamylases of the tubulin--tyrosine ligase family, only displays a catalytic activity when in complex with other proteins as it is most likely lacking domains important for autonomous activity. Part of the neuronal tubulin polyglutamylase complex. Mediates cilia and flagella polyglutamylation which is essential for their biogenesis and motility. Involved in respiratory motile cilia function through the regulation of beating asymmetry. Essential for sperm flagella biogenesis, motility and male fertility. Involved in KLF4 glutamylation which impedes its ubiquitination, thereby leading to somatic cell reprogramming, pluripotency maintenance and embryogenesis. The chain is Polyglutamylase complex subunit TTLL1 (Ttll1) from Rattus norvegicus (Rat).